A 408-amino-acid chain; its full sequence is Serine/threonine transporter SstT (408 aa).

The next 9 helical transmembrane spans lie at 11–31 (LANG…VSLA), 43–63 (FLGS…VFIL), 82–102 (IVVL…LLSM), 141–161 (ALMT…GLAL), 192–212 (IGIF…AIAG), 216–236 (LLAV…PLIV), 298–318 (MGGA…TLGI), 339–359 (ASGV…LFGI), and 363–383 (VAMQ…AAET).

Belongs to the dicarboxylate/amino acid:cation symporter (DAACS) (TC 2.A.23) family.

It localises to the cell inner membrane. It carries out the reaction L-serine(in) + Na(+)(in) = L-serine(out) + Na(+)(out). The enzyme catalyses L-threonine(in) + Na(+)(in) = L-threonine(out) + Na(+)(out). Functionally, involved in the import of serine and threonine into the cell, with the concomitant import of sodium (symport system). This Shewanella sp. (strain MR-7) protein is Serine/threonine transporter SstT.